A 314-amino-acid polypeptide reads, in one-letter code: Acetyl-coenzyme A carboxylase carboxyl transferase subunit beta, chloroplastic (314 aa).

Residues 47 to 314 enclose the CoA carboxyltransferase N-terminal domain; it reads LWTRCDNCEN…APWKEKNNQV (268 aa). 4 residues coordinate Zn(2+): cysteine 51, cysteine 54, cysteine 70, and cysteine 73. The segment at 51 to 73 adopts a C4-type zinc-finger fold; it reads CDNCENMLYIKFLKQNKGVCEEC.

It belongs to the AccD/PCCB family. Acetyl-CoA carboxylase is a heterohexamer composed of biotin carboxyl carrier protein, biotin carboxylase and 2 subunits each of ACCase subunit alpha and ACCase plastid-coded subunit beta (accD). The cofactor is Zn(2+).

It is found in the plastid. Its subcellular location is the chloroplast stroma. The enzyme catalyses N(6)-carboxybiotinyl-L-lysyl-[protein] + acetyl-CoA = N(6)-biotinyl-L-lysyl-[protein] + malonyl-CoA. It participates in lipid metabolism; malonyl-CoA biosynthesis; malonyl-CoA from acetyl-CoA: step 1/1. Functionally, component of the acetyl coenzyme A carboxylase (ACC) complex. Biotin carboxylase (BC) catalyzes the carboxylation of biotin on its carrier protein (BCCP) and then the CO(2) group is transferred by the transcarboxylase to acetyl-CoA to form malonyl-CoA. The chain is Acetyl-coenzyme A carboxylase carboxyl transferase subunit beta, chloroplastic from Angiopteris lygodiifolia (Turnip fern).